The sequence spans 591 residues: Lysyl oxidase homolog 1 (591 aa).

Residues 1 to 22 (MALALTGWQLVWGACVCVLVHG) form the signal peptide. A propeptide spanning residues 23-91 (QQAPPGQGSD…PRRRGGLRRR (69 aa)) is cleaved from the precursor. 2 disordered regions span residues 77 to 107 (APQA…SDTV) and 233 to 373 (EYGG…RLSV). Residues 82-92 (PRRRGGLRRRQ) are compositionally biased toward basic residues. A compositionally biased stretch (gly residues) spans 298–313 (NGGGGGGTYGGGGGDP). The segment at 319–386 (PPYGNMPPEA…YRPNQNGRGL (68 aa)) is interaction with FBLN5. Residues 387-591 (PDLVPDPNYV…STTNCKIVQS (205 aa)) form a lysyl-oxidase like region. 5 disulfide bridges follow: C412–C418, C465–C514, C498–C504, C525–C535, and C572–C586. Cu cation contacts are provided by H466, H468, and H470. Positions 494 to 529 (KASFCLEDSTCDFGNLKRYACTSHTQGLSPGCYDTY) form a cross-link, lysine tyrosylquinone (Lys-Tyr). Y529 is subject to 2',4',5'-topaquinone.

It belongs to the lysyl oxidase family. Interacts (via propeptide) with EFEMP2. Interacts with FBLN5. It depends on Cu cation as a cofactor. Lysine tyrosylquinone residue serves as cofactor. In terms of processing, the lysine tyrosylquinone cross-link (LTQ) is generated by condensation of the epsilon-amino group of a lysine with a topaquinone produced by oxidation of tyrosine. Post-translationally, proteolytic processing by a furin-like protease causes removal of N-terminal propeptide resulting in an enzyme largely inactive, but further proteolytic processing by BMP1 results in enzyme activation.

Its subcellular location is the secreted. The protein resides in the extracellular space. It localises to the extracellular matrix. The enzyme catalyses L-lysyl-[protein] + O2 + H2O = (S)-2-amino-6-oxohexanoyl-[protein] + H2O2 + NH4(+). Functionally, catalyzes the oxidative deamination of lysine and hydroxylysine residues in collagen and elastin, resulting in the formation of covalent cross-linkages, and the stabilization of collagen and elastin fibers. Essential for the elastic fiber homeostasis and for their maintenance at adult age. This Bos taurus (Bovine) protein is Lysyl oxidase homolog 1 (LOXL1).